Here is a 491-residue protein sequence, read N- to C-terminus: MISKQEYQAQAAQGYNRIPLVQELLADLDTPLSLYLKLANRPYTYLLESVVGGERFGRYSFIGLPCSHYLKASGKHVDVYQNGEIVEQHDGNPLPFIEAFHNRFKTPEIPSLPRFTGGLVGYFGYETIYNFEHFAHRLKNTTKADPLGTPDILLMLSQELAVIDNLSGKIHLVVYADPSQPDGYERARERLEDIRTQLRQSCAIPLSLGSKHTEAVSEFGEEPFKACVNKIKDYIFAGDCMQVVPSQRMSMEFTDSPLALYRALRTLNPSPYLFYYDFGDFHIVGSSPEILVRRERDDVIVRPIAGTRLRGKTPAEDLANEQDLLSDAKEIAEHVMLIDLGRNDVGRISKTGEVKVTDKMVIEKYSHVMHIVSNVEGRLKDGMTNMDILAATFPAGTLSGAPKVRAMEIIEEVEPSKRGIYGGAVGVWGFNNDMDLAIAIRTAVVKNNTLYVQSGAGVVADSDPASEWQETQNKARAVIRAAQMVQEGLDK.

L-tryptophan contacts are provided by residues Ser-49 and 271-273 (PYL). Position 306-307 (306-307 (GT)) interacts with chorismate. Glu-333 provides a ligand contact to Mg(2+). Chorismate is bound by residues Tyr-421, Arg-441, 455–457 (GAG), and Gly-457. Position 470 (Glu-470) interacts with Mg(2+).

This sequence belongs to the anthranilate synthase component I family. As to quaternary structure, heterotetramer consisting of two non-identical subunits: a beta subunit (TrpG) and a large alpha subunit (TrpE). Mg(2+) serves as cofactor.

It catalyses the reaction chorismate + L-glutamine = anthranilate + pyruvate + L-glutamate + H(+). It participates in amino-acid biosynthesis; L-tryptophan biosynthesis; L-tryptophan from chorismate: step 1/5. Feedback inhibited by tryptophan. Functionally, part of a heterotetrameric complex that catalyzes the two-step biosynthesis of anthranilate, an intermediate in the biosynthesis of L-tryptophan. In the first step, the glutamine-binding beta subunit (TrpG) of anthranilate synthase (AS) provides the glutamine amidotransferase activity which generates ammonia as a substrate that, along with chorismate, is used in the second step, catalyzed by the large alpha subunit of AS (TrpE) to produce anthranilate. In the absence of TrpG, TrpE can synthesize anthranilate directly from chorismate and high concentrations of ammonia. The protein is Anthranilate synthase component 1 (trpE) of Neisseria meningitidis serogroup A / serotype 4A (strain DSM 15465 / Z2491).